The following is a 491-amino-acid chain: Protein nucleotidyltransferase YdiU (491 aa).

Residues G92, G94, R95, K115, D127, G128, R178, and R185 each contribute to the ATP site. Catalysis depends on D254, which acts as the Proton acceptor. The Mg(2+) site is built by N255 and D264. Residue D264 participates in ATP binding.

It belongs to the SELO family. It depends on Mg(2+) as a cofactor. The cofactor is Mn(2+).

The catalysed reaction is L-seryl-[protein] + ATP = 3-O-(5'-adenylyl)-L-seryl-[protein] + diphosphate. The enzyme catalyses L-threonyl-[protein] + ATP = 3-O-(5'-adenylyl)-L-threonyl-[protein] + diphosphate. It catalyses the reaction L-tyrosyl-[protein] + ATP = O-(5'-adenylyl)-L-tyrosyl-[protein] + diphosphate. It carries out the reaction L-histidyl-[protein] + UTP = N(tele)-(5'-uridylyl)-L-histidyl-[protein] + diphosphate. The catalysed reaction is L-seryl-[protein] + UTP = O-(5'-uridylyl)-L-seryl-[protein] + diphosphate. The enzyme catalyses L-tyrosyl-[protein] + UTP = O-(5'-uridylyl)-L-tyrosyl-[protein] + diphosphate. Nucleotidyltransferase involved in the post-translational modification of proteins. It can catalyze the addition of adenosine monophosphate (AMP) or uridine monophosphate (UMP) to a protein, resulting in modifications known as AMPylation and UMPylation. This Mycolicibacterium paratuberculosis (strain ATCC BAA-968 / K-10) (Mycobacterium paratuberculosis) protein is Protein nucleotidyltransferase YdiU.